A 158-amino-acid polypeptide reads, in one-letter code: NAD(P)H-quinone oxidoreductase subunit N (158 aa).

This sequence belongs to the complex I NdhN subunit family. NDH-1 can be composed of about 15 different subunits; different subcomplexes with different compositions have been identified which probably have different functions.

Its subcellular location is the cellular thylakoid membrane. It carries out the reaction a plastoquinone + NADH + (n+1) H(+)(in) = a plastoquinol + NAD(+) + n H(+)(out). The enzyme catalyses a plastoquinone + NADPH + (n+1) H(+)(in) = a plastoquinol + NADP(+) + n H(+)(out). Its function is as follows. NDH-1 shuttles electrons from an unknown electron donor, via FMN and iron-sulfur (Fe-S) centers, to quinones in the respiratory and/or the photosynthetic chain. The immediate electron acceptor for the enzyme in this species is believed to be plastoquinone. Couples the redox reaction to proton translocation, and thus conserves the redox energy in a proton gradient. Cyanobacterial NDH-1 also plays a role in inorganic carbon-concentration. This Prochlorococcus marinus (strain AS9601) protein is NAD(P)H-quinone oxidoreductase subunit N.